A 249-amino-acid chain; its full sequence is MEDIVIVGRHAVKEAIISGHAINKILIQDGIKKQQINDILKNAKSQKLIVQTVPKSKLDFLANAPHQGVAALVAPYEYANFDEFLQKQKKKARYSTVIILDGLEDPHNLGSILRTADASGVDAVIIPKRRSVALTQTVAKASTGAIQHVPVIRVTNLSKTIDELKDNGFWIAGTEANNATDYRDLQADMSLGIVIGSEGQGMSRLVSDKCDFHIKIPMVGHVNSLNASVAASLMMYEVYRKRHQLEEKS.

S-adenosyl-L-methionine is bound by residues Gly196, Ile216, and Leu225.

This sequence belongs to the class IV-like SAM-binding methyltransferase superfamily. RNA methyltransferase TrmH family.

This is Putative TrmH family tRNA/rRNA methyltransferase from Staphylococcus epidermidis (strain ATCC 35984 / DSM 28319 / BCRC 17069 / CCUG 31568 / BM 3577 / RP62A).